A 396-amino-acid polypeptide reads, in one-letter code: Enoyl-[acyl-carrier-protein] reductase [NADH] (396 aa).

NAD(+) is bound by residues 47-52 (GASTGF), 73-74 (FE), 110-111 (DA), and 138-139 (LA). Position 224 (Tyr224) interacts with substrate. Tyr234 serves as the catalytic Proton donor. NAD(+)-binding positions include Lys243 and 272-274 (LVT).

This sequence belongs to the TER reductase family. In terms of assembly, monomer.

It carries out the reaction a 2,3-saturated acyl-[ACP] + NAD(+) = a (2E)-enoyl-[ACP] + NADH + H(+). Its pathway is lipid metabolism; fatty acid biosynthesis. Functionally, involved in the final reduction of the elongation cycle of fatty acid synthesis (FAS II). Catalyzes the reduction of a carbon-carbon double bond in an enoyl moiety that is covalently linked to an acyl carrier protein (ACP). This is Enoyl-[acyl-carrier-protein] reductase [NADH] from Cytophaga hutchinsonii (strain ATCC 33406 / DSM 1761 / CIP 103989 / NBRC 15051 / NCIMB 9469 / D465).